Reading from the N-terminus, the 137-residue chain is Methylglyoxal synthase (137 aa).

In terms of domain architecture, MGS-like spans 1–137; sequence MKIALIAHDR…NIVHGRDRDA (137 aa). Substrate-binding positions include histidine 8, lysine 12, 34-37, and 54-55; these read TGTT and SG. The active-site Proton donor/acceptor is the aspartate 60. Histidine 87 provides a ligand contact to substrate.

The protein belongs to the methylglyoxal synthase family.

The enzyme catalyses dihydroxyacetone phosphate = methylglyoxal + phosphate. Catalyzes the formation of methylglyoxal from dihydroxyacetone phosphate. The polypeptide is Methylglyoxal synthase (Bacillus licheniformis (strain ATCC 14580 / DSM 13 / JCM 2505 / CCUG 7422 / NBRC 12200 / NCIMB 9375 / NCTC 10341 / NRRL NRS-1264 / Gibson 46)).